We begin with the raw amino-acid sequence, 62 residues long: Small ribosomal subunit protein eS27 (62 aa).

Residues Cys-17, Cys-20, Cys-36, and Cys-39 each contribute to the Zn(2+) site. A C4-type zinc finger spans residues 17–39 (CPDCENEQVVFERASTVVECTVC).

This sequence belongs to the eukaryotic ribosomal protein eS27 family. Part of the 30S ribosomal subunit. The cofactor is Zn(2+).

This chain is Small ribosomal subunit protein eS27, found in Methanoculleus marisnigri (strain ATCC 35101 / DSM 1498 / JR1).